Consider the following 60-residue polypeptide: Short neurotoxin 1 (60 aa).

Disulfide bonds link Cys-3/Cys-22, Cys-17/Cys-39, Cys-41/Cys-52, and Cys-53/Cys-58.

Belongs to the three-finger toxin family. Short-chain subfamily. Type I alpha-neurotoxin sub-subfamily. As to expression, expressed by the venom gland.

The protein resides in the secreted. Functionally, binds to muscle nicotinic acetylcholine receptor (nAChR) and inhibit acetylcholine from binding to the receptor, thereby impairing neuromuscular transmission. The recombinant protein also barely blocks voltage-gated potassium channel Kv1.3/KCNA3 (2.71% inhibition at 60 nM of toxin). This Hydrophis lapemoides (Persian gulf sea snake) protein is Short neurotoxin 1.